A 380-amino-acid chain; its full sequence is Cytochrome b (380 aa).

Helical transmembrane passes span 34–54, 78–99, 114–134, and 179–199; these read FGSL…LLAT, WLIR…YLHI, WNTG…GYVL, and FFAL…IHLT. The heme b site is built by His84 and His98. Heme b-binding residues include His183 and His197. His202 serves as a coordination point for a ubiquinone. Helical transmembrane passes span 227-247, 289-309, 321-341, and 348-368; these read LKDI…ALFS, LGGV…PLLH, FSQF…WVGS, and FIII…LLFP.

This sequence belongs to the cytochrome b family. As to quaternary structure, the cytochrome bc1 complex contains 11 subunits: 3 respiratory subunits (MT-CYB, CYC1 and UQCRFS1), 2 core proteins (UQCRC1 and UQCRC2) and 6 low-molecular weight proteins (UQCRH/QCR6, UQCRB/QCR7, UQCRQ/QCR8, UQCR10/QCR9, UQCR11/QCR10 and a cleavage product of UQCRFS1). This cytochrome bc1 complex then forms a dimer. The cofactor is heme b.

The protein localises to the mitochondrion inner membrane. Functionally, component of the ubiquinol-cytochrome c reductase complex (complex III or cytochrome b-c1 complex) that is part of the mitochondrial respiratory chain. The b-c1 complex mediates electron transfer from ubiquinol to cytochrome c. Contributes to the generation of a proton gradient across the mitochondrial membrane that is then used for ATP synthesis. The sequence is that of Cytochrome b (MT-CYB) from Alle alle (Dovekie).